The primary structure comprises 447 residues: Serine/threonine-protein phosphatase 2A 55 kDa regulatory subunit B alpha isoform (447 aa).

Ala2 is modified (N-acetylalanine). 7 WD repeats span residues 11–80 (QWCF…FQSH), 94–174 (EKIN…IFAN), 175–218 (AHTY…VDIK), 227–270 (EVIT…KLFE), 288–325 (ISDV…TYQV), 347–381 (ECCW…TLEA), and 414–446 (DFNK…QDKV).

Belongs to the phosphatase 2A regulatory subunit B family. PP2A consists of a common heterodimeric core enzyme, composed of a 36 kDa catalytic subunit (subunit C) and a 65 kDa constant regulatory subunit (PR65 or subunit A), that associates with a variety of regulatory subunits. Proteins that associate with the core dimer include three families of regulatory subunits B (the R2/B/PR55/B55, R3/B''/PR72/PR130/PR59 and R5/B'/B56 families), the 48 kDa variable regulatory subunit, viral proteins, and cell signaling molecules. Interacts with the PP2A C catalytic subunit PPP2CA. Interacts with the PP2A A subunit PPP2R1A. Found in a complex with at least ARL2, PPP2CB, PPP2R1A, PPP2R2A, PPP2R5E and TBCD. Interacts with MFHAS1; the interaction is direct. Interacts with PABIR1/FAM122A (via its N-terminus); the interaction is direct and inhibits PP2A activity. Interacts with ARPP19; the interaction is direct and inhibits PP2A activity. Interacts with CRTC3. As to expression, brain.

In terms of biological role, substrate-recognition subunit of protein phosphatase 2A (PP2A) that plays a key role in cell cycle by controlling mitosis entry and exit. Involved in chromosome clustering during late mitosis by mediating dephosphorylation of MKI67. Essential for serine/threonine-protein phosphatase 2A-mediated dephosphorylation of WEE1, preventing its ubiquitin-mediated proteolysis, increasing WEE1 protein levels, and promoting the G2/M checkpoint. This chain is Serine/threonine-protein phosphatase 2A 55 kDa regulatory subunit B alpha isoform (Ppp2r2a), found in Rattus norvegicus (Rat).